The sequence spans 829 residues: Receptor-type tyrosine-protein phosphatase alpha (829 aa).

Positions 1-19 (MDSWFILVLFGSGLIHVSA) are cleaved as a signal peptide. Residues 20 to 142 (NNATTVSPSL…ETFPPADETP (123 aa)) are Extracellular-facing. N-linked (GlcNAc...) asparagine glycans are attached at residues N21, N47, N51, N68, N80, N86, N104, and N124. The interval 79–106 (VNSSHSDNGTRRAASTESGGTTISPNGS) is disordered. Residues 143-166 (IIAVMVALSSLLVIVFIIIVLYML) form a helical membrane-spanning segment. At 167–829 (RFKKYKQAGS…DAFSDYANFK (663 aa)) the chain is on the cytoplasmic side. 2 positions are modified to phosphoserine: S202 and S204. Tyrosine-protein phosphatase domains are found at residues 232 to 528 (FREE…LLEH) and 560 to 818 (LEEE…VQEY). Residues D437, 469–475 (CSAGVGR), and Q513 contribute to the substrate site. Catalysis depends on C469, which acts as the Phosphocysteine intermediate. Residue C759 is the Phosphocysteine intermediate of the active site. Phosphotyrosine is present on Y825.

The protein belongs to the protein-tyrosine phosphatase family. Receptor class 4 subfamily. In terms of assembly, part of a complex comprised of PTPRA, BCAR1, BCAR3 (via SH2 domain), and SRC. Within the complex, interacts (when phosphorylated on Tyr-825) with BCAR3 (via SH2 domain). Interacts with GRB2. Post-translationally, integrin binding to extracellular matrix induces phosphorylation at Tyr-825 which induces PTPRA localization and recruitment of BCAR3, BCAR1 and CRK to focal adhesions. In terms of tissue distribution, widely expressed. Highest expression in brain and kidney.

It is found in the cell membrane. The protein localises to the cell junction. The protein resides in the focal adhesion. The enzyme catalyses O-phospho-L-tyrosyl-[protein] + H2O = L-tyrosyl-[protein] + phosphate. Its function is as follows. Tyrosine protein phosphatase which is involved in integrin-mediated focal adhesion formation. Following integrin engagement, specifically recruits BCAR3, BCAR1 and CRK to focal adhesions thereby promoting SRC-mediated phosphorylation of BRAC1 and the subsequent activation of PAK and small GTPase RAC1 and CDC42. The chain is Receptor-type tyrosine-protein phosphatase alpha (Ptpra) from Mus musculus (Mouse).